The chain runs to 385 residues: Ribosomal RNA large subunit methyltransferase G (385 aa).

This sequence belongs to the methyltransferase superfamily. RlmG family.

It is found in the cytoplasm. It carries out the reaction guanosine(1835) in 23S rRNA + S-adenosyl-L-methionine = N(2)-methylguanosine(1835) in 23S rRNA + S-adenosyl-L-homocysteine + H(+). In terms of biological role, specifically methylates the guanine in position 1835 (m2G1835) of 23S rRNA. The polypeptide is Ribosomal RNA large subunit methyltransferase G (Vibrio campbellii (strain ATCC BAA-1116)).